The chain runs to 123 residues: Large ribosomal subunit protein bL12 (123 aa).

It belongs to the bacterial ribosomal protein bL12 family. In terms of assembly, homodimer. Part of the ribosomal stalk of the 50S ribosomal subunit. Forms a multimeric L10(L12)X complex, where L10 forms an elongated spine to which 2 to 4 L12 dimers bind in a sequential fashion. Binds GTP-bound translation factors.

Forms part of the ribosomal stalk which helps the ribosome interact with GTP-bound translation factors. Is thus essential for accurate translation. In Parvibaculum lavamentivorans (strain DS-1 / DSM 13023 / NCIMB 13966), this protein is Large ribosomal subunit protein bL12.